We begin with the raw amino-acid sequence, 334 residues long: MEQNSRALIDGFNRKIDYLRMSVTDRCDFRCVYCMAEDMQFLPRQQILSLEELFQVAERFVALGTRKIRLTGGEPLVRQGIVDLCGRIAALPGLRELCMTSNGSQLPRLAQPLFDAGLSRLNISLDSLDAERFKQLTRTGDLAQVIAGIDAARRAGFQRIKLNCVVLKGRNDDELVDLVRFAIDRELDITFIEEMPLGVISEHERGESFCSSDEVRARLAEQFTLIESTESSQGPARYWRLAEASSTRVGFISPHSHNFCATCNRVRLTVEGRLLLCLGNEHSMDLKQVLRAHPGDAERLEKAIRDSLHLKPYRHHFEVGGDVQILRFMNMTGG.

The region spanning 11–236 (GFNRKIDYLR…ESTESSQGPA (226 aa)) is the Radical SAM core domain. Position 20 (arginine 20) interacts with GTP. [4Fe-4S] cluster is bound by residues cysteine 27 and cysteine 31. Residue tyrosine 33 coordinates S-adenosyl-L-methionine. [4Fe-4S] cluster is bound at residue cysteine 34. Arginine 69 is a binding site for GTP. S-adenosyl-L-methionine is bound at residue glycine 73. Threonine 100 contacts GTP. Serine 124 provides a ligand contact to S-adenosyl-L-methionine. GTP is bound at residue lysine 161. Methionine 195 provides a ligand contact to S-adenosyl-L-methionine. Cysteine 260 and cysteine 263 together coordinate [4Fe-4S] cluster. 265-267 (RVR) is a binding site for GTP. Residue cysteine 277 coordinates [4Fe-4S] cluster.

Belongs to the radical SAM superfamily. MoaA family. In terms of assembly, monomer and homodimer. [4Fe-4S] cluster serves as cofactor.

The catalysed reaction is GTP + AH2 + S-adenosyl-L-methionine = (8S)-3',8-cyclo-7,8-dihydroguanosine 5'-triphosphate + 5'-deoxyadenosine + L-methionine + A + H(+). The protein operates within cofactor biosynthesis; molybdopterin biosynthesis. Its function is as follows. Catalyzes the cyclization of GTP to (8S)-3',8-cyclo-7,8-dihydroguanosine 5'-triphosphate. The polypeptide is GTP 3',8-cyclase (Pseudomonas putida (strain W619)).